A 1058-amino-acid chain; its full sequence is Carbamoyl phosphate synthase large chain (1058 aa).

The interval 1 to 401 (MPKRKDIQKI…SLLKACRSLE (401 aa)) is carboxyphosphate synthetic domain. R129, R169, G175, G176, R208, I210, E215, G241, I242, H243, Q284, and E298 together coordinate ATP. An ATP-grasp 1 domain is found at 133–327 (KQLMQELDQP…IAKLAAKIAV (195 aa)). Mg(2+)-binding residues include Q284, E298, and N300. The Mn(2+) site is built by Q284, E298, and N300. An oligomerization domain region spans residues 402-546 (IGVCHNEMTS…YSTYELENES (145 aa)). Residues 547–929 (VQSNKESILV…ALYKAFEANN (383 aa)) are carbamoyl phosphate synthetic domain. In terms of domain architecture, ATP-grasp 2 spans 671 to 861 (EKALKELGIP…MAQIATKLIL (191 aa)). Residues R707, S746, I748, E752, G777, V778, H779, S780, Q820, and E832 each coordinate ATP. Residues Q820, E832, and N834 each contribute to the Mg(2+) site. 3 residues coordinate Mn(2+): Q820, E832, and N834. One can recognise an MGS-like domain in the interval 930 to 1058 (SHLSEFGQIV…ESRCFNIEAI (129 aa)). Positions 930-1058 (SHLSEFGQIV…ESRCFNIEAI (129 aa)) are allosteric domain.

This sequence belongs to the CarB family. In terms of assembly, composed of two chains; the small (or glutamine) chain promotes the hydrolysis of glutamine to ammonia, which is used by the large (or ammonia) chain to synthesize carbamoyl phosphate. Tetramer of heterodimers (alpha,beta)4. Mg(2+) is required as a cofactor. Mn(2+) serves as cofactor.

It carries out the reaction hydrogencarbonate + L-glutamine + 2 ATP + H2O = carbamoyl phosphate + L-glutamate + 2 ADP + phosphate + 2 H(+). The enzyme catalyses hydrogencarbonate + NH4(+) + 2 ATP = carbamoyl phosphate + 2 ADP + phosphate + 2 H(+). It functions in the pathway amino-acid biosynthesis; L-arginine biosynthesis; carbamoyl phosphate from bicarbonate: step 1/1. Its pathway is pyrimidine metabolism; UMP biosynthesis via de novo pathway; (S)-dihydroorotate from bicarbonate: step 1/3. Functionally, large subunit of the glutamine-dependent carbamoyl phosphate synthetase (CPSase). CPSase catalyzes the formation of carbamoyl phosphate from the ammonia moiety of glutamine, carbonate, and phosphate donated by ATP, constituting the first step of 2 biosynthetic pathways, one leading to arginine and/or urea and the other to pyrimidine nucleotides. The large subunit (synthetase) binds the substrates ammonia (free or transferred from glutamine from the small subunit), hydrogencarbonate and ATP and carries out an ATP-coupled ligase reaction, activating hydrogencarbonate by forming carboxy phosphate which reacts with ammonia to form carbamoyl phosphate. The protein is Carbamoyl phosphate synthase large chain of Streptococcus pyogenes serotype M3 (strain SSI-1).